A 125-amino-acid polypeptide reads, in one-letter code: Profilin-A (125 aa).

N-acetylserine is present on S2.

It belongs to the profilin family. In terms of assembly, occurs in many kinds of cells as a complex with monomeric actin in a 1:1 ratio.

The protein resides in the cytoplasm. Its subcellular location is the cytoskeleton. Binds to actin and affects the structure of the cytoskeleton. At high concentrations, profilin prevents the polymerization of actin, whereas it enhances it at low concentrations. By binding to PIP2, it inhibits the formation of IP3 and DG. The protein is Profilin-A (PROA) of Physarum polycephalum (Slime mold).